Consider the following 635-residue polypeptide: Threonine--tRNA ligase (635 aa).

One can recognise a TGS domain in the interval 1-61 (MIQITLPDSS…SQDSALSIVT (61 aa)). The segment at 242-533 (DHRKLGKELD…LIEEHAGALP (292 aa)) is catalytic. The Zn(2+) site is built by cysteine 333, histidine 384, and histidine 510.

Belongs to the class-II aminoacyl-tRNA synthetase family. In terms of assembly, homodimer. Requires Zn(2+) as cofactor.

Its subcellular location is the cytoplasm. It catalyses the reaction tRNA(Thr) + L-threonine + ATP = L-threonyl-tRNA(Thr) + AMP + diphosphate + H(+). Catalyzes the attachment of threonine to tRNA(Thr) in a two-step reaction: L-threonine is first activated by ATP to form Thr-AMP and then transferred to the acceptor end of tRNA(Thr). Also edits incorrectly charged L-seryl-tRNA(Thr). This is Threonine--tRNA ligase from Polaromonas naphthalenivorans (strain CJ2).